We begin with the raw amino-acid sequence, 147 residues long: Nucleoside diphosphate kinase (147 aa).

Lys9, Phe57, Arg85, Thr91, Arg102, and Asn112 together coordinate ATP. His115 serves as the catalytic Pros-phosphohistidine intermediate.

It belongs to the NDK family. In terms of assembly, homotetramer. Requires Mg(2+) as cofactor.

It localises to the cytoplasm. The catalysed reaction is a 2'-deoxyribonucleoside 5'-diphosphate + ATP = a 2'-deoxyribonucleoside 5'-triphosphate + ADP. It catalyses the reaction a ribonucleoside 5'-diphosphate + ATP = a ribonucleoside 5'-triphosphate + ADP. Its function is as follows. Major role in the synthesis of nucleoside triphosphates other than ATP. The ATP gamma phosphate is transferred to the NDP beta phosphate via a ping-pong mechanism, using a phosphorylated active-site intermediate. This Listeria monocytogenes serotype 4a (strain HCC23) protein is Nucleoside diphosphate kinase.